A 315-amino-acid chain; its full sequence is WD repeat domain-containing protein 83 (315 aa).

7 WD repeats span residues 23–62, 65–104, 107–146, 151–188, 190–228, 231–272, and 275–313; these read CGQGAVRAVRFNVDGNYCLTCGSDKTLKLWNPLRGTLLRT, GHGYEVLDAAGSFDNSHLCSGGGDKTVVLWDVATGQVVRK, GHAGKVNTVQFNEEATVILSGSIDSSVRCWDCRSRKPEPV, EARDGISSVKVSDHEILAGSVDGRVRRYDLRMGQVTSD, VGSPITCTCFSRDGQCTLISSLDSTLRLLDKDTGELLGE, GHKN…LALA, and VGSNVVQSLAYHPADPCLLTAMGGSIQYWREETYEAEGG.

Belongs to the WD repeat MORG1 family. In terms of assembly, interacts with EGLN3/PHD3. Interacts with ERK signaling proteins MAP2K1/MEK1, MAP2K2/MEK2, LAMTOR3, ARAF/Raf-1, MAPK1/ERK2 and MAPK3/ERK1. Identified in the spliceosome C complex. Interacts with PARD6B and CRB3. Interacts strongly with GTP-bound RRAGA but not with inactive GDP-bound. Interacts with p62/SQSTM1. As to expression, highly expressed in testis and brain. Expressed at intermediate level in heart, liver and kidney. Weakly expressed in spleen and lung and absent in muscle.

The protein resides in the cytoplasm. The protein localises to the lysosome. It localises to the nucleus. Its function is as follows. Molecular scaffold protein for various multimeric protein complexes. Acts as a module in the assembly of a multicomponent scaffold for the ERK pathway, linking ERK responses to specific agonists. At low concentrations it enhances ERK activation, whereas high concentrations lead to the inhibition of ERK activation. Also involved in response to hypoxia by acting as a negative regulator of HIF1A/HIF-1-alpha via its interaction with EGLN3/PHD3. May promote degradation of HIF1A. May act by recruiting signaling complexes to a specific upstream activator. May also be involved in pre-mRNA splicing. Participates in tight junction development by regulating apico-basal polarity, a key step in tissue development and organization. Mechanistically, regulates the translocation of PAR6-aPKC from the cytoplasm to the apical surface by acting as an adapter between PARD6B AND CRB3. Also acts as a negative regulator of mTORC1 under nutrient-rich conditions by binding to the active Rag GTPases to inhibit mTORC1 localization to the lysosome and phosphorylation of downstream targets. This facilitates constitutive basal autophagy during nutrient availability. The polypeptide is WD repeat domain-containing protein 83 (Wdr83) (Rattus norvegicus (Rat)).